The chain runs to 559 residues: MTSEKPRKYSQKIVDGSAQAPSRSMLRAVGFNDDDFKKSQVGIASTWSMVTPCNMHINTLAEEVGKGVDSAGAKSVIYNTITVSDGISMGTEGMKYSLVSREVICDSIEAVSAGMGHDGIIAIGGCDKNMPGCLMGLARLNRPSIFVYGGTILPGENHTDIVSVFEAVGSYAAGDIPITQLEHIEKTAIPGAGSCGGMYTANTLASAIEALGMSMPNSSAQNAISQNKKQDCIDAGKAIVYLLEHDIKPSDIMTKKAFENAITLIITLGGSTNAVLHLIAMADAVGVEVTLDDFVRIGDKTPVIADLRPSGQYLMSELIEIGGIQPLMKRLLDAGMLHGDCMTVTGKTMAENLADVADYPAGQNIILPFDKPIKKDSHLVILAGNLAPEGAVSKITGKEGLRFTGNAKVYDSEEQGFAAIIDGQVVAGDVVVIRYEGPKGGPGMREMLSPTSAIMGKGLGNDVALITDGRFSGGSRGFVVGHVTPEAYEGGAIALVENGDSITIDAQSREMTLNITDEEMASRKQRWQQPAPKYTRGLLAKYARTVSSASTGAVTDKPS.

Cys-53 lines the [2Fe-2S] cluster pocket. Asp-85 serves as a coordination point for Mg(2+). A [2Fe-2S] cluster-binding site is contributed by Cys-126. Residues Asp-127 and Lys-128 each contribute to the Mg(2+) site. Lys-128 is modified (N6-carboxylysine). Cys-195 is a binding site for [2Fe-2S] cluster. Glu-446 lines the Mg(2+) pocket. The active-site Proton acceptor is the Ser-472.

This sequence belongs to the IlvD/Edd family. Homodimer. [2Fe-2S] cluster serves as cofactor. Requires Mg(2+) as cofactor.

It catalyses the reaction (2R)-2,3-dihydroxy-3-methylbutanoate = 3-methyl-2-oxobutanoate + H2O. It carries out the reaction (2R,3R)-2,3-dihydroxy-3-methylpentanoate = (S)-3-methyl-2-oxopentanoate + H2O. The protein operates within amino-acid biosynthesis; L-isoleucine biosynthesis; L-isoleucine from 2-oxobutanoate: step 3/4. It participates in amino-acid biosynthesis; L-valine biosynthesis; L-valine from pyruvate: step 3/4. Its function is as follows. Functions in the biosynthesis of branched-chain amino acids. Catalyzes the dehydration of (2R,3R)-2,3-dihydroxy-3-methylpentanoate (2,3-dihydroxy-3-methylvalerate) into 2-oxo-3-methylpentanoate (2-oxo-3-methylvalerate) and of (2R)-2,3-dihydroxy-3-methylbutanoate (2,3-dihydroxyisovalerate) into 2-oxo-3-methylbutanoate (2-oxoisovalerate), the penultimate precursor to L-isoleucine and L-valine, respectively. The protein is Dihydroxy-acid dehydratase 2 of Pseudoalteromonas translucida (strain TAC 125).